A 277-amino-acid polypeptide reads, in one-letter code: Large ribosomal subunit protein uL2 (277 aa).

A disordered region spans residues 222 to 277 (GVAMNPVDHPHGGGEGRTSGGRHPVTPWGKPTKGKKTRSNKATDKFIMRSRHQRKK).

The protein belongs to the universal ribosomal protein uL2 family. Part of the 50S ribosomal subunit. Forms a bridge to the 30S subunit in the 70S ribosome.

Functionally, one of the primary rRNA binding proteins. Required for association of the 30S and 50S subunits to form the 70S ribosome, for tRNA binding and peptide bond formation. It has been suggested to have peptidyltransferase activity; this is somewhat controversial. Makes several contacts with the 16S rRNA in the 70S ribosome. In Brucella melitensis biotype 1 (strain ATCC 23456 / CCUG 17765 / NCTC 10094 / 16M), this protein is Large ribosomal subunit protein uL2.